Here is a 112-residue protein sequence, read N- to C-terminus: Larval cuticle protein III/IV (112 aa).

A signal peptide spans 1–16 (MFKILLVCALAALVAA). In terms of domain architecture, Chitin-binding type R&amp;R spans 31–92 (PDGFKTVVSL…PSSDLLPVAP (62 aa)).

Functionally, component of the larval cuticle. In Drosophila miranda (Fruit fly), this protein is Larval cuticle protein III/IV (Lcp3).